We begin with the raw amino-acid sequence, 642 residues long: MQLSWKDIPTVPTSNDMLDIVLNRTQRKTPTVIRAGFKITRIRAFYMRKVKFTCEGFIEKFDDILKGFPNINDVHPFHRDLMDTLYEKNHYKVSLASVSRAKTLVEQVARDYVRLLKFGQSLFQCKQLKRAALGRMATIMKKLKDPLVYLEQVRQHLGRLPSIDPNTRTLLICGYPNVGKSSFLRCITKADVEVQPYAFTTKSLYVGHFDYKYLRFQAIDTPGILDRPTEEMNNIEMQSIYAIAHLRSTVLYFMDLSEQCGFTIEAQVKLFHSIKPLFANKSVMVVINKTDIIRPEDLDEERQEMLKSIMDFPGVEIMTTSCINEENVMAVRNKACEKLLASRIENKLKSQTRITNVLNKIHVAHPQKRDDGVERTPYIPEAFKNVKKYDPEDPERRPLARDIEAENGGAGVFNINLKDSYLLENDEWKNDVMPEILNGRNVYDFLDPDIAAKLQALEEEEERLEAEGFYESDDDAIEGMDDEDVEDIREKAAWIRDKQKKMINAARSRKALKNRGTMPRSKMAKSFEDMEKHMSSLGHNMSALQSKQSAAAAKNRYTESGADIVYGNNESAKTAGKLRQSDRLMDGVADASMRSKADRMAKLHRRERNRQARQGEADRHATASLPKHLFSGKRGIGSNDRR.

Positions 168-340 (RTLLICGYPN…VRNKACEKLL (173 aa)) constitute an OBG-type G domain. Residues 174–181 (GYPNVGKS), 220–224 (DTPGI), and 288–291 (NKTD) each bind GTP. Residues 585–642 (MDGVADASMRSKADRMAKLHRRERNRQARQGEADRHATASLPKHLFSGKRGIGSNDRR) are disordered. A compositionally biased stretch (basic and acidic residues) spans 609 to 621 (NRQARQGEADRHA).

Belongs to the TRAFAC class OBG-HflX-like GTPase superfamily. OBG GTPase family. NOG subfamily.

The protein resides in the nucleus. It is found in the nucleolus. In terms of biological role, involved in the biogenesis of the 60S ribosomal subunit. This chain is Nucleolar GTP-binding protein 1 (NOG1), found in Eremothecium gossypii (strain ATCC 10895 / CBS 109.51 / FGSC 9923 / NRRL Y-1056) (Yeast).